Reading from the N-terminus, the 437-residue chain is Nuclear distribution protein PAC1 (437 aa).

A coiled-coil region spans residues 64–94; that stretch reads LSVIRLQRKVMDLETRLEAAEREASSTHKAN. WD repeat units lie at residues 114-153, 156-217, 221-260, 263-301, 304-356, 358-397, and 401-437; these read LHKQ…IETT, AHTR…ANVK, GHDH…CVRT, GHTD…GKMT, GHEH…LLIL, GHDN…RCIR, and AHGH…KVWQ. Positions 165–186 are disordered; it reads DFSQPDTGASRDKSHDKPRADV. Positions 173 to 186 are enriched in basic and acidic residues; the sequence is ASRDKSHDKPRADV.

Belongs to the WD repeat LIS1/nudF family. Self-associates. Interacts with NDL1 and dynein.

It is found in the cytoplasm. Its subcellular location is the cytoskeleton. The protein resides in the spindle pole. In terms of biological role, positively regulates the activity of the minus-end directed microtubule motor protein dynein. Plays a central role in positioning the mitotic spindle at the bud neck during cell division. Targets cytoplasmic dynein to microtubule plus ends, thereby promoting dynein-mediated microtubule sliding along the bud cortex and consequently the movement of the mitotic spindle to the bud neck. The polypeptide is Nuclear distribution protein PAC1 (Yarrowia lipolytica (strain CLIB 122 / E 150) (Yeast)).